Here is a 475-residue protein sequence, read N- to C-terminus: Aspartyl/glutamyl-tRNA(Asn/Gln) amidotransferase subunit B (475 aa).

Belongs to the GatB/GatE family. GatB subfamily. Heterotrimer of A, B and C subunits.

It catalyses the reaction L-glutamyl-tRNA(Gln) + L-glutamine + ATP + H2O = L-glutaminyl-tRNA(Gln) + L-glutamate + ADP + phosphate + H(+). It carries out the reaction L-aspartyl-tRNA(Asn) + L-glutamine + ATP + H2O = L-asparaginyl-tRNA(Asn) + L-glutamate + ADP + phosphate + 2 H(+). In terms of biological role, allows the formation of correctly charged Asn-tRNA(Asn) or Gln-tRNA(Gln) through the transamidation of misacylated Asp-tRNA(Asn) or Glu-tRNA(Gln) in organisms which lack either or both of asparaginyl-tRNA or glutaminyl-tRNA synthetases. The reaction takes place in the presence of glutamine and ATP through an activated phospho-Asp-tRNA(Asn) or phospho-Glu-tRNA(Gln). This is Aspartyl/glutamyl-tRNA(Asn/Gln) amidotransferase subunit B from Staphylococcus carnosus (strain TM300).